We begin with the raw amino-acid sequence, 1407 residues long: DNA-directed RNA polymerase subunit beta' (1407 aa).

Positions 70, 72, 85, and 88 each coordinate Zn(2+). Positions 460, 462, and 464 each coordinate Mg(2+). Residues cysteine 814, cysteine 888, cysteine 895, and cysteine 898 each contribute to the Zn(2+) site.

This sequence belongs to the RNA polymerase beta' chain family. The RNAP catalytic core consists of 2 alpha, 1 beta, 1 beta' and 1 omega subunit. When a sigma factor is associated with the core the holoenzyme is formed, which can initiate transcription. Requires Mg(2+) as cofactor. The cofactor is Zn(2+).

It carries out the reaction RNA(n) + a ribonucleoside 5'-triphosphate = RNA(n+1) + diphosphate. Its function is as follows. DNA-dependent RNA polymerase catalyzes the transcription of DNA into RNA using the four ribonucleoside triphosphates as substrates. This chain is DNA-directed RNA polymerase subunit beta', found in Buchnera aphidicola subsp. Acyrthosiphon pisum (strain APS) (Acyrthosiphon pisum symbiotic bacterium).